Here is a 370-residue protein sequence, read N- to C-terminus: MQAQVFRVPMSNPADVSGVAKLIDEGVIRAEEVVCVLGKTEGNGCVNDFTRGYTTLAFKVYFSEKLGVSRQEVGERIAFIMSGGTEGVMAPHCTIFTVQKTDNKQKTAAEGKRLAVQQIFTREFLPEEIGRMPQVTETADAVRRAMREAGIADASDVHFVQVKCPLLTAGRMHDAVERGHTVATEDTYESMGYSRGASALGIALALGEVEKANLSDEVITADYSLYSSVASTSAGIELMNNEIIVMGNSRAWGGDLVIGHAEMKDAIDGAAVRQALRDVGCCENDLPTVDELGRVVNVFAKAEASPDGEVRNRRHTMLDDSDINSTRHARAVVNAVIASIVGDPMVYVSGGSEHQGPAGGGPVAVIARTA.

Positions methionine 1 to asparagine 103 are RU A. Substrate-binding positions include arginine 51 and serine 82–glycine 83. Positions arginine 113–arginine 250 are RU B. The active site involves lysine 163. Residues arginine 195 and serine 233–alanine 234 contribute to the substrate site. Serine 233 (nucleophile) is an active-site residue. The tract at residues leucine 256–alanine 370 is RU C. Glutamate 303 provides a ligand contact to Mg(2+). Residues arginine 330 and serine 349–glycine 350 contribute to the substrate site. Residues serine 352, glutamine 355, glycine 356, proline 357, and glycine 360 each coordinate Mg(2+).

It belongs to the cyclic amide hydrolase (CyAH) family. In terms of assembly, homotetramer.

The catalysed reaction is cyanurate + H2O = 1-carboxybiuret + H(+). It participates in xenobiotic degradation; atrazine degradation; biuret from cyanurate: step 1/1. Inhibited by barbituric acid. Functionally, responsible for the hydrolysis of cyanuric acid, an intermediate formed during catabolism of s-triazine based compounds in herbicides such as atrazine and polymers such as melamine. Catalyzes the hydrolytic opening of the s-triazine ring of cyanuric acid (2,4,6-trihydroxy-s-triazine) to yield carbon dioxide and carboxybiuret, which spontaneously decarboxylates to biuret. The sequence is that of Cyanuric acid amidohydrolase (trzD) from Pseudomonas sp.